Here is a 306-residue protein sequence, read N- to C-terminus: Tyrosine recombinase XerD (306 aa).

One can recognise a Core-binding (CB) domain in the interval 1–83 (MGFIAQFLEM…TIKSYYEFLI (83 aa)). In terms of domain architecture, Tyr recombinase spans 104–299 (KLPEILSIAQ…QTNHLKKALL (196 aa)). Residues Arg145, Lys176, His251, Arg254, and His277 contribute to the active site. The active-site O-(3'-phospho-DNA)-tyrosine intermediate is the Tyr286.

The protein belongs to the 'phage' integrase family. XerD subfamily. As to quaternary structure, forms a cyclic heterotetrameric complex composed of two molecules of XerC and two molecules of XerD.

The protein localises to the cytoplasm. In terms of biological role, site-specific tyrosine recombinase, which acts by catalyzing the cutting and rejoining of the recombining DNA molecules. The XerC-XerD complex is essential to convert dimers of the bacterial chromosome into monomers to permit their segregation at cell division. It also contributes to the segregational stability of plasmids. In Rickettsia conorii (strain ATCC VR-613 / Malish 7), this protein is Tyrosine recombinase XerD.